The primary structure comprises 572 residues: Laccase-3 (572 aa).

Positions 1 to 18 are cleaved as a signal peptide; that stretch reads MARTTFLVSVSLFVSAVL. 2 Plastocyanin-like domains span residues 21–145 and 157–304; these read TVEY…LVIY and IDDE…LIYE. Residues histidine 82, histidine 84, histidine 127, and histidine 129 each coordinate Cu cation. Residues cysteine 103 and cysteine 561 are joined by a disulfide bond. N-linked (GlcNAc...) asparagine glycans are attached at residues asparagine 182, asparagine 228, asparagine 294, asparagine 367, and asparagine 405. The Plastocyanin-like 3 domain occupies 422 to 540; that stretch reads DMPTLLKILT…EGFAMVFAEA (119 aa). 7 residues coordinate Cu cation: histidine 470, histidine 473, histidine 475, histidine 522, cysteine 523, histidine 524, and histidine 528.

This sequence belongs to the multicopper oxidase family. In terms of assembly, homodimer. The cofactor is Cu cation. As to expression, in mycelia, at a lower level than LCC4.

Its subcellular location is the secreted. The enzyme catalyses 4 hydroquinone + O2 = 4 benzosemiquinone + 2 H2O. Lignin degradation and detoxification of lignin-derived products. This chain is Laccase-3 (LCC3), found in Thanatephorus cucumeris (Black scurf of potato).